The primary structure comprises 220 residues: Ras-related protein Rab-11B (220 aa).

Position 18–25 (18–25) interacts with GTP; sequence GDSGVGKS. Positions 40–48 match the Effector region motif; the sequence is KLSTIGVEF. GTP is bound by residues 66-70 and 124-127; these read DTAGQ and NKSD. S-geranylgeranyl cysteine attachment occurs at residues cysteine 219 and cysteine 220.

Belongs to the small GTPase superfamily. Rab family.

It localises to the cell membrane. The chain is Ras-related protein Rab-11B (rab11B) from Dictyostelium discoideum (Social amoeba).